The primary structure comprises 271 residues: Acetyl-coenzyme A carboxylase carboxyl transferase subunit alpha (271 aa).

The 247-residue stretch at 1 to 247 folds into the CoA carboxyltransferase C-terminal domain; it reads MSRELIRTAD…KKTILEALGE (247 aa).

Belongs to the AccA family. Acetyl-CoA carboxylase is a heterohexamer composed of biotin carboxyl carrier protein (AccB), biotin carboxylase (AccC) and two subunits each of ACCase subunit alpha (AccA) and ACCase subunit beta (AccD).

It localises to the cytoplasm. It catalyses the reaction N(6)-carboxybiotinyl-L-lysyl-[protein] + acetyl-CoA = N(6)-biotinyl-L-lysyl-[protein] + malonyl-CoA. Its pathway is lipid metabolism; malonyl-CoA biosynthesis; malonyl-CoA from acetyl-CoA: step 1/1. Component of the acetyl coenzyme A carboxylase (ACC) complex. First, biotin carboxylase catalyzes the carboxylation of biotin on its carrier protein (BCCP) and then the CO(2) group is transferred by the carboxyltransferase to acetyl-CoA to form malonyl-CoA. The protein is Acetyl-coenzyme A carboxylase carboxyl transferase subunit alpha of Clostridium perfringens (strain 13 / Type A).